Reading from the N-terminus, the 179-residue chain is MNETLKEELLQSIREVKDYPKKGILFKDITTLLNYPKLFNKLIDALKKRYLALNIDFIVGIEARGFILGSALAYALGVGFVPVRKKGKLPAHTLSQSYSLEYGSDSIEIHSDAFRGVKGVRVVLIDDLLATGGTALASLELIKALQAECIEACFLIGLKELPGIQLLEERVKTFCLLEC.

This sequence belongs to the purine/pyrimidine phosphoribosyltransferase family. As to quaternary structure, homodimer.

It localises to the cytoplasm. The catalysed reaction is AMP + diphosphate = 5-phospho-alpha-D-ribose 1-diphosphate + adenine. It functions in the pathway purine metabolism; AMP biosynthesis via salvage pathway; AMP from adenine: step 1/1. In terms of biological role, catalyzes a salvage reaction resulting in the formation of AMP, that is energically less costly than de novo synthesis. The protein is Adenine phosphoribosyltransferase of Helicobacter pylori (strain HPAG1).